The following is a 1234-amino-acid chain: Formin-like protein 3 (1234 aa).

In terms of domain architecture, Phosphatase tensin-type spans 1–208 (MRLDSFPASI…QYVARRNISP (208 aa)). The Phosphocysteine intermediate role is filled by Cys-141. Positions 214 to 352 (ERALSFDCLI…FRAEMLFCEL (139 aa)) constitute a C2 tensin-type domain. Disordered regions lie at residues 443–478 (DSDE…NINH) and 492–840 (LVNT…LKPL). The span at 498–507 (VLPPTTPPPC) shows a compositional bias: pro residues. Basic and acidic residues predominate over residues 524 to 534 (VQHESPSDRKL). 7 stretches are compositionally biased toward pro residues: residues 536-576 (SPSP…PPLP), 584-656 (QPPP…PPAP), 663-673 (PAPPPPPPPPR), 688-699 (GPPPPPPPPLPP), 709-721 (PSAP…PPPA), 729-739 (APAPPLPPPLP), and 762-784 (PAPP…PPPL). The region spanning 827–1226 (QQSNPPKKAS…KLEKDKEKAT (400 aa)) is the FH2 domain.

The protein belongs to the formin-like family. Class-II subfamily.

This is Formin-like protein 3 (FH3) from Oryza sativa subsp. japonica (Rice).